A 1020-amino-acid chain; its full sequence is Fanconi-associated nuclease 1 (1020 aa).

A compositionally biased stretch (basic and acidic residues) spans 1–11 (MPSQRKSPDQK). A disordered region spans residues 1–24 (MPSQRKSPDQKRPRRSLSTSKTAK). Residues 14–22 (RRSLSTSKT) carry the D-box motif. The UBZ4-type zinc-finger motif lies at 41-69 (KLACSTCHKMVPRYDLIRHLDESCANNGV). Residues C44, C47, H59, and C64 each contribute to the Zn(2+) site. The segment at 173 to 208 (KNEGLASQCPQTSPSTPGTSLTDNCPEMEDKDEVLN) is disordered. The span at 180-195 (QCPQTSPSTPGTSLTD) shows a compositional bias: polar residues. The KEN box motif lies at 212 to 214 (KEN). Basic and acidic residues predominate over residues 224–242 (ENASEQKVKNNKITGDESQ). Disordered regions lie at residues 224–252 (ENASEQKVKNNKITGDESQKASCGEPALT) and 269–288 (LVSNTKSSPGDTLVKQESAR). A compositionally biased stretch (polar residues) spans 269 to 278 (LVSNTKSSPG). Residues 673–737 (SSRAVEVLER…AIRCIREGLA (65 aa)) are a coiled coil. Residues E837, D963, E978, and V979 each contribute to the Mn(2+) site. A VRR-NUC domain is found at 898–1010 (AESLRAWVGE…GADVEVCHVV (113 aa)).

It belongs to the FAN1 family. In terms of assembly, interacts with FANCD2 (when monoubiquitinated). Interacts with FANCI, MLH1, MLH3 and PMS2. The cofactor is Mn(2+). Mg(2+) is required as a cofactor. Post-translationally, ubiquitinated and degraded during mitotic exit by the APC/C-Cdh1 complex.

It is found in the nucleus. It carries out the reaction Hydrolytically removes 5'-nucleotides successively from the 3'-hydroxy termini of 3'-hydroxy-terminated oligonucleotides.. Functionally, nuclease required for the repair of DNA interstrand cross-links (ICL) recruited at sites of DNA damage by monoubiquitinated FANCD2. Specifically involved in repair of ICL-induced DNA breaks by being required for efficient homologous recombination, probably in the resolution of homologous recombination intermediates. Not involved in DNA double-strand breaks resection. Acts as a 5'-3' exonuclease that anchors at a cut end of DNA and cleaves DNA successively at every third nucleotide, allowing to excise an ICL from one strand through flanking incisions. Probably keeps excising with 3'-flap annealing until it reaches and unhooks the ICL. Acts at sites that have a 5'-terminal phosphate anchor at a nick or a 1- or 2-nucleotide flap and is augmented by a 3' flap. Also has endonuclease activity toward 5'-flaps. The chain is Fanconi-associated nuclease 1 from Mus musculus (Mouse).